The chain runs to 541 residues: DEAD-box ATP-dependent RNA helicase 57 (541 aa).

Positions 43 to 52 (VEEEEDTEQP) are enriched in acidic residues. The segment at 43–72 (VEEEEDTEQPEAEKVIVSSKKRKRRSSNSV) is disordered. The Q motif signature appears at 141–169 (ELSSRYGCEGYILRNLAELGFKEPTPIQR). The region spanning 172-342 (IPILLSGREC…RSIMHDAVRV (171 aa)) is the Helicase ATP-binding domain. 185 to 192 (APTGSGKT) contributes to the ATP binding site. The short motif at 289–292 (DESD) is the DEAD box element. In terms of domain architecture, Helicase C-terminal spans 370–514 (ALRQSFAESL…EVPSWIMSLK (145 aa)). The segment at 517–541 (KWRKHRPRRDSISTKPKADKNDTDE) is disordered. Residues 525 to 541 (RDSISTKPKADKNDTDE) show a composition bias toward basic and acidic residues.

It belongs to the DEAD box helicase family. DDX52/ROK1 subfamily.

The enzyme catalyses ATP + H2O = ADP + phosphate + H(+). The protein is DEAD-box ATP-dependent RNA helicase 57 (RH57) of Arabidopsis thaliana (Mouse-ear cress).